A 259-amino-acid polypeptide reads, in one-letter code: Ubiquinone/menaquinone biosynthesis C-methyltransferase UbiE (259 aa).

Residues T82, D103, and 131–132 (NA) each bind S-adenosyl-L-methionine.

Belongs to the class I-like SAM-binding methyltransferase superfamily. MenG/UbiE family.

It carries out the reaction a 2-demethylmenaquinol + S-adenosyl-L-methionine = a menaquinol + S-adenosyl-L-homocysteine + H(+). It catalyses the reaction a 2-methoxy-6-(all-trans-polyprenyl)benzene-1,4-diol + S-adenosyl-L-methionine = a 5-methoxy-2-methyl-3-(all-trans-polyprenyl)benzene-1,4-diol + S-adenosyl-L-homocysteine + H(+). The protein operates within quinol/quinone metabolism; menaquinone biosynthesis; menaquinol from 1,4-dihydroxy-2-naphthoate: step 2/2. It functions in the pathway cofactor biosynthesis; ubiquinone biosynthesis. Its function is as follows. Methyltransferase required for the conversion of demethylmenaquinol (DMKH2) to menaquinol (MKH2) and the conversion of 2-polyprenyl-6-methoxy-1,4-benzoquinol (DDMQH2) to 2-polyprenyl-3-methyl-6-methoxy-1,4-benzoquinol (DMQH2). The polypeptide is Ubiquinone/menaquinone biosynthesis C-methyltransferase UbiE (Agrobacterium fabrum (strain C58 / ATCC 33970) (Agrobacterium tumefaciens (strain C58))).